A 24-amino-acid polypeptide reads, in one-letter code: Defensin D5 (24 aa).

The protein belongs to the DEFL family. Group IV subfamily. As to expression, distributed in the epidermal cell layer of leaves and in the subepidermal layer region of stems. Not in roots.

The protein resides in the secreted. It localises to the cell wall. Antimicrobial peptide. Active against Fusarium spp., Gram-positive and Gram-negative bacterial pathogens. The protein is Defensin D5 of Spinacia oleracea (Spinach).